A 602-amino-acid polypeptide reads, in one-letter code: Myotubularin (602 aa).

Positions 1–16 (MATSSTPKYNSNSLEN) are enriched in polar residues. The segment at 1 to 33 (MATSSTPKYNSNSLENSVRRSPGDGINHEQNDE) is disordered. Positions 17-33 (SVRRSPGDGINHEQNDE) are enriched in basic and acidic residues. Residues 28-96 (HEQNDEISRL…GVIARIEKMG (69 aa)) form the GRAM domain. Residues 162-537 (GWAVYDAMTE…RHLELWVNYY (376 aa)) enclose the Myotubularin phosphatase domain. Positions 287, 312, and 313 each coordinate a 1,2-diacyl-sn-glycero-3-phospho-(1D-myo-inositol-3,5-bisphosphate). 3 residues coordinate a 1,2-diacyl-sn-glycero-3-phospho-(1D-myo-inositol-3-phosphate): asparagine 287, asparagine 312, and isoleucine 313. Cysteine 374 serves as the catalytic Phosphocysteine intermediate. A 1,2-diacyl-sn-glycero-3-phospho-(1D-myo-inositol-3,5-bisphosphate) contacts are provided by serine 375, aspartate 376, glycine 377, tryptophan 378, aspartate 379, arginine 380, lysine 416, and arginine 420. A 1,2-diacyl-sn-glycero-3-phospho-(1D-myo-inositol-3-phosphate) is bound by residues serine 375, aspartate 376, glycine 377, tryptophan 378, aspartate 379, and arginine 380. Arginine 420 is a binding site for a 1,2-diacyl-sn-glycero-3-phospho-(1D-myo-inositol-3-phosphate). The interval 577 to 602 (NSPKINRSTTSPSSPSQMMPQVQTPF) is disordered. Residues 584 to 602 (STTSPSSPSQMMPQVQTPF) show a composition bias toward low complexity.

This sequence belongs to the protein-tyrosine phosphatase family. Non-receptor class myotubularin subfamily.

It localises to the cytoplasm. It is found in the cell membrane. The protein resides in the cell projection. Its subcellular location is the filopodium. The protein localises to the ruffle. It localises to the late endosome. It is found in the myofibril. The protein resides in the sarcomere. It carries out the reaction a 1,2-diacyl-sn-glycero-3-phospho-(1D-myo-inositol-3-phosphate) + H2O = a 1,2-diacyl-sn-glycero-3-phospho-(1D-myo-inositol) + phosphate. The enzyme catalyses a 1,2-diacyl-sn-glycero-3-phospho-(1D-myo-inositol-3,5-bisphosphate) + H2O = a 1,2-diacyl-sn-glycero-3-phospho-(1D-myo-inositol-5-phosphate) + phosphate. The catalysed reaction is 1,2-dioctanoyl-sn-glycero-3-phospho-(1-D-myo-inositol-3-phosphate) + H2O = 1,2-dioctanoyl-sn-glycero-3-phospho-(1D-myo-inositol) + phosphate. It catalyses the reaction 1,2-dioctanoyl-sn-glycero-3-phospho-(1D-myo-inositol-3,5-bisphosphate) + H2O = 1,2-dioctanoyl-sn-glycero-3-phospho-(1D-myo-inositol-5-phosphate) + phosphate. It carries out the reaction 1,2-dihexadecanoyl-sn-glycero-3-phospho-(1D-myo-inositol-3,5-phosphate) + H2O = 1,2-dihexadecanoyl-sn-glycero-3-phospho-(1D-myo-inositol-5-phosphate) + phosphate. Functionally, lipid phosphatase which dephosphorylates phosphatidylinositol 3-monophosphate (PI3P) and phosphatidylinositol 3,5-bisphosphate (PI(3,5)P2). This chain is Myotubularin (mtm1), found in Xenopus laevis (African clawed frog).